Reading from the N-terminus, the 710-residue chain is Dynein axonemal assembly factor 3 homolog (710 aa).

Residues 403–487 (GAEAGAGAGP…DSDPAAAAST (85 aa)) are disordered. The span at 404-416 (AEAGAGAGPGGEA) shows a compositional bias: gly residues. A compositionally biased stretch (low complexity) spans 417-438 (AAGASSSSGKEEAAAAAAAGKE). Positions 453 to 462 (SGSGAPGAGT) are enriched in gly residues. Over residues 478-487 (DSDPAAAAST) the composition is skewed to low complexity.

Belongs to the DNAAF3 family.

It localises to the cytoplasm. Its function is as follows. Required for the assembly of axonemal inner and outer dynein arms. Involved in preassembly of dyneins into complexes before their transport into cilia. The polypeptide is Dynein axonemal assembly factor 3 homolog (DAB1) (Chlamydomonas reinhardtii (Chlamydomonas smithii)).